The following is a 453-amino-acid chain: Homogentisate 1,2-dioxygenase (453 aa).

Residue His306 is the Proton acceptor of the active site. 2 residues coordinate Fe cation: His349 and Glu355. 2 residues coordinate homogentisate: Tyr364 and His385. Fe cation is bound at residue His385.

The protein belongs to the homogentisate dioxygenase family. As to quaternary structure, hexamer; dimer of trimers. Fe cation serves as cofactor.

The catalysed reaction is homogentisate + O2 = 4-maleylacetoacetate + H(+). The protein operates within amino-acid degradation; L-phenylalanine degradation; acetoacetate and fumarate from L-phenylalanine: step 4/6. In terms of biological role, involved in the catabolism of homogentisate (2,5-dihydroxyphenylacetate or 2,5-OH-PhAc), a central intermediate in the degradation of phenylalanine and tyrosine. Catalyzes the oxidative ring cleavage of the aromatic ring of homogentisate to yield maleylacetoacetate. The chain is Homogentisate 1,2-dioxygenase from Rhizobium etli (strain ATCC 51251 / DSM 11541 / JCM 21823 / NBRC 15573 / CFN 42).